The primary structure comprises 239 residues: Adenylate kinase 2 (239 aa).

ATP is bound at residue 29–34 (GSGKGT). Residues 49 to 78 (STGDILRAIIASGSELGQKVQKITESGGLV) are NMP. Residues T50, R55, 76–78 (GLV), 104–107 (GFPR), and Q111 each bind AMP. The tract at residues 145 to 182 (GRLFHLASGRSYHELFNPPKVPMVDDITGDRLVHRSDD) is LID. Residues R146 and 155-156 (SY) each bind ATP. R179 and R190 together coordinate AMP.

This sequence belongs to the adenylate kinase family. AK2 subfamily. Monomer. It depends on Mg(2+) as a cofactor.

It is found in the cytoplasm. It localises to the cytosol. It catalyses the reaction AMP + ATP = 2 ADP. It participates in purine metabolism; purine nucleotide biosynthesis. Functionally, catalyzes the reversible transfer of the terminal phosphate group between ATP and AMP. Plays an important role in cellular energy homeostasis and in adenine nucleotide metabolism. This chain is Adenylate kinase 2, found in Schistosoma mansoni (Blood fluke).